The chain runs to 104 residues: Viral histone-like protein (104 aa).

This sequence belongs to the bacterial histone-like protein family. As to quaternary structure, homodimer.

The protein localises to the virion. Its activity is regulated as follows. Stilbene derivatives SD1 and SD4 disrupt the binding between pA104R and DNA and inhibit the viral replication in primary alveolar macrophages. Its function is as follows. DNA-binding protein that plays a critical role in nucleoid compaction, genome replication and DNA replication and transcription. Binds to both ssDNA and dsDNA with a binding site covering about 15 nucleotides. Displays DNA-supercoiling activity only when associated with the viral DNA topoisomerase 2. In African swine fever virus (strain Badajoz 1971 Vero-adapted) (Ba71V), this protein is Viral histone-like protein.